The chain runs to 81 residues: Small ribosomal subunit protein bS18 (81 aa).

This sequence belongs to the bacterial ribosomal protein bS18 family. Part of the 30S ribosomal subunit. Forms a tight heterodimer with protein bS6.

Binds as a heterodimer with protein bS6 to the central domain of the 16S rRNA, where it helps stabilize the platform of the 30S subunit. The chain is Small ribosomal subunit protein bS18 from Chlamydia muridarum (strain MoPn / Nigg).